The sequence spans 261 residues: Indole-3-glycerol phosphate synthase (261 aa).

Belongs to the TrpC family.

It carries out the reaction 1-(2-carboxyphenylamino)-1-deoxy-D-ribulose 5-phosphate + H(+) = (1S,2R)-1-C-(indol-3-yl)glycerol 3-phosphate + CO2 + H2O. It participates in amino-acid biosynthesis; L-tryptophan biosynthesis; L-tryptophan from chorismate: step 4/5. In Burkholderia pseudomallei (strain 668), this protein is Indole-3-glycerol phosphate synthase.